Consider the following 606-residue polypeptide: Peptide-N(4)-(N-acetyl-beta-glucosaminyl)asparagine amidase (606 aa).

One can recognise a Thioredoxin domain in the interval 2 to 108; sequence PVTEVGSLPE…IAEKIRQHYS (107 aa). The Zn(2+) site is built by cysteine 191, cysteine 194, cysteine 225, and cysteine 228. The active-site Nucleophile is the cysteine 251. Catalysis depends on residues histidine 278 and aspartate 295. In terms of domain architecture, PAW spans 404 to 606; the sequence is DLGGRITGSE…SFSVKIWMKN (203 aa).

It belongs to the transglutaminase-like superfamily. PNGase family. Zn(2+) is required as a cofactor.

It is found in the cytoplasm. The protein resides in the endoplasmic reticulum. It catalyses the reaction Hydrolysis of an N(4)-(acetyl-beta-D-glucosaminyl)asparagine residue in which the glucosamine residue may be further glycosylated, to yield a (substituted) N-acetyl-beta-D-glucosaminylamine and a peptide containing an aspartate residue.. Inhibited by Zn(2+) and z-VAD-fmk (caspase inhibitor) but unaffected by EDTA. In terms of biological role, specifically deglycosylates the denatured form of N-linked glycoproteins in the cytoplasm and assists their proteasome-mediated degradation. Cleaves the beta-aspartyl-glucosamine (GlcNAc) of the glycan and the amide side chain of Asn, converting Asn to Asp. Prefers proteins containing high-mannose over those bearing complex type oligosaccharides. Can recognize misfolded proteins in the endoplasmic reticulum that are exported to the cytosol to be destroyed and deglycosylate them, while it has no activity toward native proteins. Deglycosylation is a prerequisite for subsequent proteasome-mediated degradation of some, but not all, misfolded glycoproteins. Also displays oxidoreductase (thioredoxin) activity. Involved in regulating the expression of proteasomal subunits such as rpt-3 in order to confer resistance to proteasomal dysfunction. In Caenorhabditis elegans, this protein is Peptide-N(4)-(N-acetyl-beta-glucosaminyl)asparagine amidase (png-1).